Here is a 290-residue protein sequence, read N- to C-terminus: O-methyltransferase agiB (290 aa).

Asp-155 contributes to the S-adenosyl-L-methionine binding site. His-194 (proton acceptor) is an active-site residue.

The protein belongs to the class I-like SAM-binding methyltransferase superfamily. Cation-independent O-methyltransferase family.

It functions in the pathway secondary metabolite biosynthesis. Its function is as follows. O-methyltransferase; part of the gene cluster that mediates the biosynthesis of the aspergillicins A and F, 2 cryptic cyclic hexa-depsipeptides. The hexamodular NRPS agiA catalyzes the condensation of the six amino acid residues including N-Me-L-O-Me-tyrosine, L-proline 1, L-proline 2, D-isoleucine, O-acetyl-threonine, and L-isoleucine. The starting condensation domain (C1) of agiA probably loads acetyl-CoA which is condensed on the N-terminus of threonine by the first module to yield O-acetyl-threonine. The second module then loads L-isoleucine. The epimerase (E) domain on module 2 is probably involved in the formation of the D-isoleucine moiety. Modules 3 and 4 further load 2 successive L-prolines. Module 5 is then involved in the condensation of O-Me-L-tyrosine produced by the O-methyltransferase agiB and the N-methyl transferase (NMeT) domain on module 5 probably catalyzes the N-methylation to yield the N-Me-L-O-Me-tyrosine moiety. The A domain of module 5 loads preferentially O-Me-L-tyrosine, but it can also accept L-phenylalanine, which leads to the production of aspergillicin G. Module 6 then loads the last residue, L-isoleucine. The C-terminal thiolesterase (TE) domain probably cyclizes the peptide using the hydroxy group from threonine to form the cyclic depsipeptide. The protein is O-methyltransferase agiB of Aspergillus flavus (strain ATCC 200026 / FGSC A1120 / IAM 13836 / NRRL 3357 / JCM 12722 / SRRC 167).